We begin with the raw amino-acid sequence, 808 residues long: Ribosome biogenesis protein BOP1 homolog (808 aa).

2 stretches are compositionally biased toward low complexity: residues 1 to 25 (MTSP…LTPC) and 33 to 50 (ATSS…SSFD). The segment at 1 to 55 (MTSPKGKPSPKRSAPAPATAALTPCAEERTEGATSSASASASSHISSSFDSPRDD) is disordered. WD repeat units lie at residues 430–469 (GHTA…LMKR), 640–680 (KFSE…RRFK), 682–720 (SGGV…KPYK), 724–766 (SHKG…DYNK), and 777–808 (KHQR…AWTE).

Belongs to the WD repeat BOP1/ERB1 family.

The protein localises to the nucleus. It localises to the nucleolus. It is found in the nucleoplasm. Its function is as follows. Required for maturation of ribosomal RNAs and formation of the large ribosomal subunit. In Leishmania major, this protein is Ribosome biogenesis protein BOP1 homolog.